A 500-amino-acid chain; its full sequence is Cobyric acid synthase (500 aa).

A GATase cobBQ-type domain is found at 255–444; that stretch reads AIDIAVIRCP…MHDLFHNDAF (190 aa). Cys337 functions as the Nucleophile in the catalytic mechanism. His436 is an active-site residue.

It belongs to the CobB/CobQ family. CobQ subfamily.

It functions in the pathway cofactor biosynthesis; adenosylcobalamin biosynthesis. In terms of biological role, catalyzes amidations at positions B, D, E, and G on adenosylcobyrinic A,C-diamide. NH(2) groups are provided by glutamine, and one molecule of ATP is hydrogenolyzed for each amidation. This is Cobyric acid synthase from Geobacillus thermodenitrificans (strain NG80-2).